Here is a 119-residue protein sequence, read N- to C-terminus: Immunoglobulin heavy variable 3-72 (119 aa).

The signal sequence occupies residues Met1–Cys19. The interval Glu20–Ser44 is framework-1. Positions Glu20–Arg119 constitute an Ig-like domain. Cys41 and Cys117 are disulfide-bonded. Residues Gly45–Tyr52 form a complementarity-determining-1 region. Residues Met53–Arg69 form a framework-2 region. The interval Thr70 to Thr79 is complementarity-determining-2. Residues Glu80 to Cys117 are framework-3. A complementarity-determining-3 region spans residues Ala118 to Arg119.

As to quaternary structure, immunoglobulins are composed of two identical heavy chains and two identical light chains; disulfide-linked.

Its subcellular location is the secreted. It localises to the cell membrane. In terms of biological role, v region of the variable domain of immunoglobulin heavy chains that participates in the antigen recognition. Immunoglobulins, also known as antibodies, are membrane-bound or secreted glycoproteins produced by B lymphocytes. In the recognition phase of humoral immunity, the membrane-bound immunoglobulins serve as receptors which, upon binding of a specific antigen, trigger the clonal expansion and differentiation of B lymphocytes into immunoglobulins-secreting plasma cells. Secreted immunoglobulins mediate the effector phase of humoral immunity, which results in the elimination of bound antigens. The antigen binding site is formed by the variable domain of one heavy chain, together with that of its associated light chain. Thus, each immunoglobulin has two antigen binding sites with remarkable affinity for a particular antigen. The variable domains are assembled by a process called V-(D)-J rearrangement and can then be subjected to somatic hypermutations which, after exposure to antigen and selection, allow affinity maturation for a particular antigen. This Homo sapiens (Human) protein is Immunoglobulin heavy variable 3-72.